The following is a 1131-amino-acid chain: Probable chloride channel protein UM03490-D (1131 aa).

12 helical membrane-spanning segments follow: residues 137–157 (GVIV…SLAT), 206–226 (VTVT…PILP), 305–325 (FPAW…CAHL), 341–361 (IKCI…TLAI), 380–397 (GPAV…ASFF), 414–434 (SSAA…LFSL), 485–505 (FEIM…AFVI), 518–538 (YLVK…AFVG), 577–597 (MVNS…VSYG), 603–623 (GIFV…GILV), 643–663 (VPCI…LAGV), and 680–702 (ALTY…DWFS). Disordered regions lie at residues 815 to 835 (DGVE…LSVA) and 858 to 928 (ATGA…AGGG). Over residues 866–877 (GLGSTSATGVAS) the composition is skewed to low complexity. One can recognise a CBS domain in the interval 944 to 1000 (IDPTPLIVQPGMPLETVMDMFKNLGPRVILVVEYGRLSGLVTVKDVLKRIAMQEKAE). The segment covering 1061 to 1078 (RASASRGGAPGSQAGQAR) has biased composition (low complexity). A disordered region spans residues 1061 to 1131 (RASASRGGAP…VLGAQDDDDE (71 aa)). Over residues 1104–1113 (STRQTSATKN) the composition is skewed to polar residues.

The protein belongs to the chloride channel (TC 2.A.49) family.

Its subcellular location is the membrane. In terms of biological role, voltage-gated chloride channel. The sequence is that of Probable chloride channel protein UM03490-D from Mycosarcoma maydis (Corn smut fungus).